The following is a 110-amino-acid chain: Phosphoribosyl-AMP cyclohydrolase (110 aa).

Aspartate 80 contributes to the Mg(2+) binding site. Cysteine 81 lines the Zn(2+) pocket. The Mg(2+) site is built by aspartate 82 and aspartate 84. Positions 97 and 104 each coordinate Zn(2+).

This sequence belongs to the PRA-CH family. Homodimer. Mg(2+) serves as cofactor. Requires Zn(2+) as cofactor.

It is found in the cytoplasm. It carries out the reaction 1-(5-phospho-beta-D-ribosyl)-5'-AMP + H2O = 1-(5-phospho-beta-D-ribosyl)-5-[(5-phospho-beta-D-ribosylamino)methylideneamino]imidazole-4-carboxamide. It functions in the pathway amino-acid biosynthesis; L-histidine biosynthesis; L-histidine from 5-phospho-alpha-D-ribose 1-diphosphate: step 3/9. Catalyzes the hydrolysis of the adenine ring of phosphoribosyl-AMP. The sequence is that of Phosphoribosyl-AMP cyclohydrolase from Clostridium botulinum (strain Okra / Type B1).